Reading from the N-terminus, the 158-residue chain is SsrA-binding protein (158 aa).

This sequence belongs to the SmpB family.

The protein resides in the cytoplasm. Its function is as follows. Required for rescue of stalled ribosomes mediated by trans-translation. Binds to transfer-messenger RNA (tmRNA), required for stable association of tmRNA with ribosomes. tmRNA and SmpB together mimic tRNA shape, replacing the anticodon stem-loop with SmpB. tmRNA is encoded by the ssrA gene; the 2 termini fold to resemble tRNA(Ala) and it encodes a 'tag peptide', a short internal open reading frame. During trans-translation Ala-aminoacylated tmRNA acts like a tRNA, entering the A-site of stalled ribosomes, displacing the stalled mRNA. The ribosome then switches to translate the ORF on the tmRNA; the nascent peptide is terminated with the 'tag peptide' encoded by the tmRNA and targeted for degradation. The ribosome is freed to recommence translation, which seems to be the essential function of trans-translation. This chain is SsrA-binding protein, found in Caldicellulosiruptor saccharolyticus (strain ATCC 43494 / DSM 8903 / Tp8T 6331).